We begin with the raw amino-acid sequence, 155 residues long: MRTFEGSFCGKDLKFAIVISRFNSFITDELLKGCLDGLKRHEVDSENIDVYYVPGAFEIPLVCKKLAKSKKYNAIIALGAVIRGSTPHFEYVSAEVSKGIANVSLEQEVPVIFGVLTCDTVDQAIERAGTKAGNKGFDAAMSALEMANLMKNISS.

5-amino-6-(D-ribitylamino)uracil is bound by residues Phe-22, 56 to 58 (AFE), and 80 to 82 (AVI). 85–86 (ST) serves as a coordination point for (2S)-2-hydroxy-3-oxobutyl phosphate. The active-site Proton donor is the His-88. Phe-113 contacts 5-amino-6-(D-ribitylamino)uracil. Arg-127 is a (2S)-2-hydroxy-3-oxobutyl phosphate binding site.

This sequence belongs to the DMRL synthase family.

It carries out the reaction (2S)-2-hydroxy-3-oxobutyl phosphate + 5-amino-6-(D-ribitylamino)uracil = 6,7-dimethyl-8-(1-D-ribityl)lumazine + phosphate + 2 H2O + H(+). The protein operates within cofactor biosynthesis; riboflavin biosynthesis; riboflavin from 2-hydroxy-3-oxobutyl phosphate and 5-amino-6-(D-ribitylamino)uracil: step 1/2. Functionally, catalyzes the formation of 6,7-dimethyl-8-ribityllumazine by condensation of 5-amino-6-(D-ribitylamino)uracil with 3,4-dihydroxy-2-butanone 4-phosphate. This is the penultimate step in the biosynthesis of riboflavin. The chain is 6,7-dimethyl-8-ribityllumazine synthase from Caldicellulosiruptor bescii (strain ATCC BAA-1888 / DSM 6725 / KCTC 15123 / Z-1320) (Anaerocellum thermophilum).